A 155-amino-acid polypeptide reads, in one-letter code: MLITSSRKPSANTRTMCKYLASFFNCKYMTRGKMGLIDIVSLCENGLLMVVGDYHGSPGSIMFYDSHGVELLSIHLSVFYPDGYKYTPLKALEPSINGDGELFNLLSYYLDIPEGECYYDSKCLIASDDHLEFVYLDNMLFRLNIKNYRKMVMSE.

The Brix domain occupies 1–155 (MLITSSRKPS…KNYRKMVMSE (155 aa)).

Its function is as follows. Probably involved in the biogenesis of the ribosome. The sequence is that of Probable Brix domain-containing ribosomal biogenesis protein from Methanococcoides burtonii (strain DSM 6242 / NBRC 107633 / OCM 468 / ACE-M).